The chain runs to 146 residues: Hemoglobin subunit beta (146 aa).

Residues 2–146 (QWTAEEKQLI…VAHALARKYH (145 aa)) enclose the Globin domain. Heme b is bound by residues His63 and His92.

It belongs to the globin family. Heterotetramer of two alpha chains and two beta chains. As to expression, red blood cells.

Involved in oxygen transport from the lung to the various peripheral tissues. The chain is Hemoglobin subunit beta (HBB) from Turdus merula (Common blackbird).